The sequence spans 128 residues: B2 protein (128 aa).

A signal peptide spans 1 to 10 (SLILLVAVQA). Disulfide bonds link Cys26–Cys57 and Cys97–Cys114.

Belongs to the PBP/GOBP family. In terms of processing, N-glycosylated. Tubular accessory sex gland.

Its subcellular location is the secreted. In terms of biological role, may be a carrier protein for lipids. The sequence is that of B2 protein from Tenebrio molitor (Yellow mealworm beetle).